The primary structure comprises 775 residues: Polyribonucleotide nucleotidyltransferase (775 aa).

Positions 487 and 493 each coordinate Mg(2+). The 60-residue stretch at 554-613 (PKVEVVDVPEEKAPLIIGPGGSTVKKIYDETGVKVWVGEQGKVYLFVFPGGDVEKAKQMI) folds into the KH domain. S1 motif domains lie at 623–693 (GAVY…IGIE) and 707–775 (GDVY…TDDV).

The protein belongs to the polyribonucleotide nucleotidyltransferase family. It depends on Mg(2+) as a cofactor.

It localises to the cytoplasm. The catalysed reaction is RNA(n+1) + phosphate = RNA(n) + a ribonucleoside 5'-diphosphate. Functionally, involved in mRNA degradation. Catalyzes the phosphorolysis of single-stranded polyribonucleotides processively in the 3'- to 5'-direction. This chain is Polyribonucleotide nucleotidyltransferase, found in Aquifex aeolicus (strain VF5).